The sequence spans 32 residues: GGSVPCIETCVWTGCFLVPGCSCKSDKKCYLN.

The segment at residues 1–32 (GGSVPCIETCVWTGCFLVPGCSCKSDKKCYLN) is a cross-link (cyclopeptide (Gly-Asn)). Disulfide bonds link Cys6–Cys21, Cys10–Cys23, and Cys15–Cys29.

This is a cyclic peptide.

Probably participates in a plant defense mechanism. The protein is Cyclotide glopa B of Gloeospermum pauciflorum.